The sequence spans 791 residues: Subtilisin-like protease SBT5.6 (791 aa).

The N-terminal stretch at 1 to 20 (MKKLTSLFPLLFLIPLLASC) is a signal peptide. A propeptide spans 21 to 108 (AEEKQVYIVY…KSHPRKYEAH (88 aa)) (activation peptide). An Inhibitor I9 domain is found at 26–104 (VYIVYFGEHK…VSVFKSHPRK (79 aa)). A Peptidase S8 domain is found at 134–645 (ADDRFRVGRN…SGHFRPTKAA (512 aa)). The active-site Charge relay system is the Asp-160. N-linked (GlcNAc...) asparagine glycans are attached at residues Asn-193 and Asn-219. Catalysis depends on His-235, which acts as the Charge relay system. The region spanning 400–494 (FAPLVYASNV…VTPTVVDKIL (95 aa)) is the PA domain. The N-linked (GlcNAc...) asparagine glycan is linked to Asn-417. Residue Ser-578 is the Charge relay system of the active site. 3 N-linked (GlcNAc...) asparagine glycosylation sites follow: Asn-666, Asn-713, and Asn-761.

This sequence belongs to the peptidase S8 family.

The protein resides in the secreted. This chain is Subtilisin-like protease SBT5.6, found in Arabidopsis thaliana (Mouse-ear cress).